The chain runs to 249 residues: BPI fold-containing family A member 2 (249 aa).

Residues 1-18 (MLQLWKLVLLCGVLTGTS) form the signal peptide. 2 N-linked (GlcNAc...) asparagine glycosylation sites follow: asparagine 124 and asparagine 132. Cysteine 174 and cysteine 217 are joined by a disulfide.

It belongs to the BPI/LBP/Plunc superfamily. Plunc family. As to expression, detected in submandibular gland. Secreted into saliva.

It is found in the secreted. Functionally, has strong antibacterial activity against P.aeruginosa. In Homo sapiens (Human), this protein is BPI fold-containing family A member 2 (BPIFA2).